The sequence spans 146 residues: Small ribosomal subunit protein uS5 (146 aa).

Residues 8-71 (FEESIVNIGR…DNAFKNLSKV (64 aa)) enclose the S5 DRBM domain.

Belongs to the universal ribosomal protein uS5 family. In terms of assembly, part of the 30S ribosomal subunit. Contacts proteins S4 and S8.

In terms of biological role, with S4 and S12 plays an important role in translational accuracy. Its function is as follows. Located at the back of the 30S subunit body where it stabilizes the conformation of the head with respect to the body. The protein is Small ribosomal subunit protein uS5 of Sulfurimonas denitrificans (strain ATCC 33889 / DSM 1251) (Thiomicrospira denitrificans (strain ATCC 33889 / DSM 1251)).